The following is a 287-amino-acid chain: Pyridoxal kinase PdxY (287 aa).

Residues S10 and 45–46 (TQ) each bind substrate. Residues D112, A144, E149, K182, and 209 to 212 (RPLV) contribute to the ATP site. D224 is a substrate binding site.

Belongs to the pyridoxine kinase family. PdxY subfamily. Homodimer. Requires Mg(2+) as cofactor.

The catalysed reaction is pyridoxal + ATP = pyridoxal 5'-phosphate + ADP + H(+). It functions in the pathway cofactor metabolism; pyridoxal 5'-phosphate salvage; pyridoxal 5'-phosphate from pyridoxal: step 1/1. Its function is as follows. Pyridoxal kinase involved in the salvage pathway of pyridoxal 5'-phosphate (PLP). Catalyzes the phosphorylation of pyridoxal to PLP. The polypeptide is Pyridoxal kinase PdxY (Shigella boydii serotype 4 (strain Sb227)).